Reading from the N-terminus, the 132-residue chain is Small ribosomal subunit protein uS8 (132 aa).

Belongs to the universal ribosomal protein uS8 family. As to quaternary structure, part of the 30S ribosomal subunit. Contacts proteins S5 and S12.

In terms of biological role, one of the primary rRNA binding proteins, it binds directly to 16S rRNA central domain where it helps coordinate assembly of the platform of the 30S subunit. This chain is Small ribosomal subunit protein uS8, found in Levilactobacillus brevis (strain ATCC 367 / BCRC 12310 / CIP 105137 / JCM 1170 / LMG 11437 / NCIMB 947 / NCTC 947) (Lactobacillus brevis).